The primary structure comprises 238 residues: MGRKWANIVAKKTAKDGATSKIYAKFGVEIYAAAKQGEPDPELNTSLKFVIERAKQAQVPKHVIDKAIDKAKGGGDETFVQGRYEGFGPNGSMIIAETLTSNVNRTIANVRTIFNKKGGNIGAAGSVSYMFDNTGVIVFKGTDPDHIFEILLEAEVDVRDVTEEEGNIVIYTEPADLHKGIAALKAAGITEFSTTELEMIAQSEVELSPEDLEIFEGLVDALEDDDDVQKVYHNVANL.

Belongs to the TACO1 family. YeeN subfamily.

The protein resides in the cytoplasm. This Shigella flexneri protein is Probable transcriptional regulatory protein YeeN.